A 226-amino-acid chain; its full sequence is Transmembrane emp24 domain-containing protein 5 (226 aa).

The first 24 residues, 1 to 24 (MGDKTWLPFPVVLLAALLLPRAAG), serve as a signal peptide directing secretion. The Lumenal portion of the chain corresponds to 25-193 (FTPSLDSDFT…IQESNFDRVN (169 aa)). One can recognise a GOLD domain in the interval 42-123 (KECFYQPMPL…EKVIFFELIL (82 aa)). A helical membrane pass occupies residues 194–214 (FWSMVNLVVMVVVSAIQVYML). The Cytoplasmic segment spans residues 215–226 (KSLFEDKRKSRT). Positions 217–218 (LF) match the Mediates export from ER motif.

This sequence belongs to the EMP24/GP25L family. Interacts with TMED9 and TMED10.

Its subcellular location is the endoplasmic reticulum membrane. It localises to the golgi apparatus. The protein resides in the cis-Golgi network membrane. The protein localises to the endoplasmic reticulum-Golgi intermediate compartment membrane. In terms of biological role, potential role in vesicular protein trafficking, mainly in the early secretory pathway. Required for the maintenance of the Golgi apparatus; involved in protein exchange between Golgi stacks during assembly. Probably not required for COPI-vesicle-mediated retrograde transport. This Bos taurus (Bovine) protein is Transmembrane emp24 domain-containing protein 5 (TMED5).